A 30-amino-acid chain; its full sequence is Varv peptide B (30 aa).

Positions 1–30 form a cross-link, cyclopeptide (Gly-Asn); that stretch reads GLPVCGETCFGGTCNTPGCSCDPWPMCSRN. 3 disulfides stabilise this stretch: C5–C19, C9–C21, and C14–C27.

Post-translationally, this is a cyclic peptide.

Probably participates in a plant defense mechanism. This is Varv peptide B from Viola arvensis (European field pansy).